A 316-amino-acid polypeptide reads, in one-letter code: Olfactory receptor class A-like protein 1 (316 aa).

Residues 1–8 (MDLCVTIK) lie on the Extracellular side of the membrane. A helical transmembrane segment spans residues 9-29 (GVSFLLQAGLGILANALVLLA). Residues 30–39 (YAHIRLAEAR) are Cytoplasmic-facing. The chain crosses the membrane as a helical span at residues 40–60 (LQPVDAILCHLALVDLLLLLT). Over 61–97 (RGVPQTMTVFGMRNLLDDTGCKVVIYTYRIARALSVC) the chain is Extracellular. An intrachain disulfide couples Cys-81 to Cys-169. A helical membrane pass occupies residues 98–118 (ITCMLSVFQAVTVAPAAGPLL). At 119 to 132 (SGVKARLPQLLAPT) the chain is on the cytoplasmic side. A helical transmembrane segment spans residues 133 to 153 (FAALWFINMAVCIAAPFFSVA). The Extracellular portion of the chain corresponds to 154–187 (PRNGTVPPFTLNLGFCHVDFHDNLSYVLNGVAVS). N-linked (GlcNAc...) asparagine glycosylation is found at Asn-156 and Asn-176. The chain crosses the membrane as a helical span at residues 188–208 (VRDFAFVGAMLASSGFILLLL). At 209–233 (HRHRRQVRAVRRSQGSTMETRAART) the chain is on the cytoplasmic side. A helical transmembrane segment spans residues 234-254 (VLMLVILYSVFFGIDNVIWIY). Over 255-264 (MLTVAQVPPV) the chain is Extracellular. Residues 265-285 (VADMRVFFSSCYASLSPFLII) traverse the membrane as a helical segment. Topologically, residues 286–316 (SSNRKLKARMVCATSEQERQAEDGKNSSGKN) are cytoplasmic.

Belongs to the G-protein coupled receptor 1 family. In terms of tissue distribution, highly expressed in the olfactory rosette where it localizes to a subset of olfactory sensory neurons, mainly in the apical region of the neuroepithelium. Not detected in other tissues tested.

Its subcellular location is the cell membrane. In terms of biological role, probable pheromone receptor. Shows high specificity for 4-hydroxyphenylacetic acid. Activation of the receptor stimulates intracellular calcium release. This chain is Olfactory receptor class A-like protein 1, found in Danio rerio (Zebrafish).